The chain runs to 65 residues: DNA gyrase inhibitor YacG (65 aa).

Cys-10, Cys-13, Cys-29, and Cys-33 together coordinate Zn(2+). The tract at residues 45-65 is disordered; it reads EKAIPGAPDMSDSDGWSEDQY. The segment covering 55–65 has biased composition (acidic residues); it reads SDSDGWSEDQY.

The protein belongs to the DNA gyrase inhibitor YacG family. In terms of assembly, interacts with GyrB. Zn(2+) serves as cofactor.

Functionally, inhibits all the catalytic activities of DNA gyrase by preventing its interaction with DNA. Acts by binding directly to the C-terminal domain of GyrB, which probably disrupts DNA binding by the gyrase. In Vibrio cholerae serotype O1 (strain ATCC 39315 / El Tor Inaba N16961), this protein is DNA gyrase inhibitor YacG.